The primary structure comprises 92 residues: Large ribosomal subunit protein bL25 (92 aa).

Belongs to the bacterial ribosomal protein bL25 family. Part of the 50S ribosomal subunit; part of the 5S rRNA/L5/L18/L25 subcomplex. Contacts the 5S rRNA. Binds to the 5S rRNA independently of L5 and L18.

This is one of the proteins that binds to the 5S RNA in the ribosome where it forms part of the central protuberance. The chain is Large ribosomal subunit protein bL25 from Aliivibrio fischeri (strain ATCC 700601 / ES114) (Vibrio fischeri).